A 314-amino-acid chain; its full sequence is Ribosomal RNA small subunit methyltransferase H (314 aa).

Residues 37-39 (GGH), Asp-57, Phe-83, Asp-105, and Gln-112 each bind S-adenosyl-L-methionine.

It belongs to the methyltransferase superfamily. RsmH family.

The protein resides in the cytoplasm. The enzyme catalyses cytidine(1402) in 16S rRNA + S-adenosyl-L-methionine = N(4)-methylcytidine(1402) in 16S rRNA + S-adenosyl-L-homocysteine + H(+). Functionally, specifically methylates the N4 position of cytidine in position 1402 (C1402) of 16S rRNA. The chain is Ribosomal RNA small subunit methyltransferase H from Thioalkalivibrio sulfidiphilus (strain HL-EbGR7).